The chain runs to 148 residues: Large ribosomal subunit protein bL9 (148 aa).

The protein belongs to the bacterial ribosomal protein bL9 family.

Its function is as follows. Binds to the 23S rRNA. This chain is Large ribosomal subunit protein bL9, found in Listeria welshimeri serovar 6b (strain ATCC 35897 / DSM 20650 / CCUG 15529 / CIP 8149 / NCTC 11857 / SLCC 5334 / V8).